The sequence spans 288 residues: Quinate/shikimate dehydrogenase (288 aa).

Positions 71 and 107 each coordinate substrate. NAD(+)-binding positions include 132–135 (AGGA), 155–158 (NRRD), K205, 232–235 (CVYN), and G255.

This sequence belongs to the shikimate dehydrogenase family. In terms of assembly, homodimer.

The enzyme catalyses L-quinate + NAD(+) = 3-dehydroquinate + NADH + H(+). The catalysed reaction is L-quinate + NADP(+) = 3-dehydroquinate + NADPH + H(+). It catalyses the reaction shikimate + NADP(+) = 3-dehydroshikimate + NADPH + H(+). It carries out the reaction shikimate + NAD(+) = 3-dehydroshikimate + NADH + H(+). It participates in metabolic intermediate biosynthesis; chorismate biosynthesis; chorismate from D-erythrose 4-phosphate and phosphoenolpyruvate: step 4/7. Its function is as follows. The actual biological function of YdiB remains unclear, nor is it known whether 3-dehydroshikimate or quinate represents the natural substrate. Catalyzes the reversible NAD-dependent reduction of both 3-dehydroshikimate (DHSA) and 3-dehydroquinate to yield shikimate (SA) and quinate, respectively. It can use both NAD or NADP for catalysis, however it has higher catalytic efficiency with NAD. This is Quinate/shikimate dehydrogenase from Escherichia coli O17:K52:H18 (strain UMN026 / ExPEC).